The primary structure comprises 61 residues: Small ribosomal subunit protein uS14 (61 aa).

4 residues coordinate Zn(2+): C24, C27, C40, and C43.

This sequence belongs to the universal ribosomal protein uS14 family. Zinc-binding uS14 subfamily. In terms of assembly, part of the 30S ribosomal subunit. Contacts proteins S3 and S10. Zn(2+) is required as a cofactor.

Binds 16S rRNA, required for the assembly of 30S particles and may also be responsible for determining the conformation of the 16S rRNA at the A site. This chain is Small ribosomal subunit protein uS14, found in Sulfurimonas denitrificans (strain ATCC 33889 / DSM 1251) (Thiomicrospira denitrificans (strain ATCC 33889 / DSM 1251)).